Reading from the N-terminus, the 346-residue chain is Anthranilate phosphoribosyltransferase (346 aa).

5-phospho-alpha-D-ribose 1-diphosphate contacts are provided by residues G88, 91-92 (GD), T96, 98-101 (NIST), 116-124 (KHGNRAVSS), and A128. An anthranilate-binding site is contributed by G88. S100 is a binding site for Mg(2+). N119 contributes to the anthranilate binding site. R174 is an anthranilate binding site. 2 residues coordinate Mg(2+): D233 and E234.

The protein belongs to the anthranilate phosphoribosyltransferase family. As to quaternary structure, homodimer. Mg(2+) serves as cofactor.

It carries out the reaction N-(5-phospho-beta-D-ribosyl)anthranilate + diphosphate = 5-phospho-alpha-D-ribose 1-diphosphate + anthranilate. Its pathway is amino-acid biosynthesis; L-tryptophan biosynthesis; L-tryptophan from chorismate: step 2/5. Its function is as follows. Catalyzes the transfer of the phosphoribosyl group of 5-phosphorylribose-1-pyrophosphate (PRPP) to anthranilate to yield N-(5'-phosphoribosyl)-anthranilate (PRA). The protein is Anthranilate phosphoribosyltransferase of Paramagnetospirillum magneticum (strain ATCC 700264 / AMB-1) (Magnetospirillum magneticum).